The primary structure comprises 155 residues: Zinc finger HIT domain-containing protein 3 (155 aa).

Zn(2+) is bound by residues C11, C14, C22, C25, C30, C34, H38, and C42. An HIT-type zinc finger spans residues 11–42 (CVICLEKPKYRCPACRVPYCSVVCFRKHKEQC). Position 80 is a phosphoserine (S80).

Thyroid receptor interacting proteins (TRIPs) specifically interact with the ligand binding domain of the thyroid receptor (TR). Requires the presence of thyroid hormone for its interaction. Interacts with NUFIP1. Interacts (via HIT-type zinc finger) with the RUVBL1/RUVBL2 complex in the presence of ADP.

Its subcellular location is the cytoplasm. The protein resides in the nucleus. This chain is Zinc finger HIT domain-containing protein 3 (ZNHIT3), found in Homo sapiens (Human).